The following is a 222-amino-acid chain: 2-C-methyl-D-erythritol 4-phosphate cytidylyltransferase (222 aa).

This sequence belongs to the IspD/TarI cytidylyltransferase family. IspD subfamily.

It catalyses the reaction 2-C-methyl-D-erythritol 4-phosphate + CTP + H(+) = 4-CDP-2-C-methyl-D-erythritol + diphosphate. It participates in isoprenoid biosynthesis; isopentenyl diphosphate biosynthesis via DXP pathway; isopentenyl diphosphate from 1-deoxy-D-xylulose 5-phosphate: step 2/6. Functionally, catalyzes the formation of 4-diphosphocytidyl-2-C-methyl-D-erythritol from CTP and 2-C-methyl-D-erythritol 4-phosphate (MEP). The chain is 2-C-methyl-D-erythritol 4-phosphate cytidylyltransferase from Porphyromonas gingivalis (strain ATCC 33277 / DSM 20709 / CIP 103683 / JCM 12257 / NCTC 11834 / 2561).